The primary structure comprises 333 residues: GTP 3',8-cyclase (333 aa).

The region spanning 7-221 (KFGRVHDYIR…FEACNEAGYE (215 aa)) is the Radical SAM core domain. Arg-16 is a GTP binding site. Residues Cys-23 and Cys-27 each coordinate [4Fe-4S] cluster. An S-adenosyl-L-methionine-binding site is contributed by Tyr-29. Position 30 (Cys-30) interacts with [4Fe-4S] cluster. Arg-66 contributes to the GTP binding site. S-adenosyl-L-methionine is bound at residue Gly-70. Thr-97 is a GTP binding site. Ser-121 is a binding site for S-adenosyl-L-methionine. Residue Lys-158 coordinates GTP. Met-192 is a binding site for S-adenosyl-L-methionine. [4Fe-4S] cluster is bound by residues Cys-257 and Cys-260. 262 to 264 (RLR) is a binding site for GTP. Residue Cys-274 coordinates [4Fe-4S] cluster.

The protein belongs to the radical SAM superfamily. MoaA family. Monomer and homodimer. It depends on [4Fe-4S] cluster as a cofactor.

It carries out the reaction GTP + AH2 + S-adenosyl-L-methionine = (8S)-3',8-cyclo-7,8-dihydroguanosine 5'-triphosphate + 5'-deoxyadenosine + L-methionine + A + H(+). It functions in the pathway cofactor biosynthesis; molybdopterin biosynthesis. Its function is as follows. Catalyzes the cyclization of GTP to (8S)-3',8-cyclo-7,8-dihydroguanosine 5'-triphosphate. The sequence is that of GTP 3',8-cyclase from Listeria monocytogenes serotype 4b (strain CLIP80459).